The following is a 315-amino-acid chain: Ribosomal RNA small subunit methyltransferase H (315 aa).

S-adenosyl-L-methionine-binding positions include 37–39 (GGH), Asp-57, Phe-83, Asp-105, and Gln-112.

It belongs to the methyltransferase superfamily. RsmH family.

The protein resides in the cytoplasm. The enzyme catalyses cytidine(1402) in 16S rRNA + S-adenosyl-L-methionine = N(4)-methylcytidine(1402) in 16S rRNA + S-adenosyl-L-homocysteine + H(+). Functionally, specifically methylates the N4 position of cytidine in position 1402 (C1402) of 16S rRNA. This Pseudomonas fluorescens (strain Pf0-1) protein is Ribosomal RNA small subunit methyltransferase H.